The following is a 224-amino-acid chain: Ribonuclease HII (224 aa).

One can recognise an RNase H type-2 domain in the interval 1–210 (MKVAGADEAG…AKKIEEKFKR (210 aa)). Asp-7, Glu-8, and Asp-105 together coordinate a divalent metal cation.

This sequence belongs to the RNase HII family. It depends on Mn(2+) as a cofactor. Mg(2+) serves as cofactor.

The protein resides in the cytoplasm. It carries out the reaction Endonucleolytic cleavage to 5'-phosphomonoester.. Functionally, endonuclease that specifically degrades the RNA of RNA-DNA hybrids. The chain is Ribonuclease HII (rnhB) from Pyrococcus abyssi (strain GE5 / Orsay).